Here is a 345-residue protein sequence, read N- to C-terminus: Probable 3'(2'),5'-bisphosphate nucleotidase 4 (345 aa).

Asp-46 functions as the Proton acceptor in the catalytic mechanism. Mg(2+) is bound by residues Glu-71, Asp-134, Val-136, and Asp-137. Catalysis depends on Thr-139, which acts as the Proton acceptor. Positions 139, 247, 250, and 264 each coordinate adenosine 3',5'-bisphosphate. Positions 247, 250, and 264 each coordinate AMP.

Belongs to the inositol monophosphatase superfamily. Mg(2+) is required as a cofactor.

It carries out the reaction 3'-phosphoadenylyl sulfate + H2O = adenosine 5'-phosphosulfate + phosphate. The enzyme catalyses adenosine 3',5'-bisphosphate + H2O = AMP + phosphate. It catalyses the reaction adenosine 2',5'-bisphosphate + H2O = AMP + phosphate. The catalysed reaction is 1D-myo-inositol 1,4-bisphosphate + H2O = 1D-myo-inositol 4-phosphate + phosphate. It carries out the reaction 1D-myo-inositol 1,3,4-trisphosphate + H2O = 1D-myo-inositol 3,4-bisphosphate + phosphate. Its pathway is signal transduction; phosphatidylinositol signaling pathway. Functionally, phosphatase that converts adenosine 3'-phosphate 5'-phosphosulfate (PAPS) to adenosine 5'-phosphosulfate (APS) and 3'(2')-phosphoadenosine 5'-phosphate (PAP) to AMP. Is also able to hydrolyze inositol 1,4-bisphosphate and inositol 1,3,4-trisphosphate. The sequence is that of Probable 3'(2'),5'-bisphosphate nucleotidase 4 (SAL4) from Arabidopsis thaliana (Mouse-ear cress).